The sequence spans 405 residues: Alpha-N-acetylgalactosaminidase (405 aa).

Intrachain disulfides connect Cys-21–Cys-63, Cys-25–Cys-32, and Cys-111–Cys-142. Substrate contacts are provided by residues 61–62 (DD) and Lys-138. Asp-140 (nucleophile) is an active-site residue. Residue Asn-161 is glycosylated (N-linked (GlcNAc...) asparagine). Cys-171 and Cys-193 are joined by a disulfide. Ser-172 is a binding site for substrate. An N-linked (GlcNAc...) asparagine glycan is attached at Asn-185. Arg-197 and Asp-201 together coordinate substrate. Asp-201 (proton donor) is an active-site residue. A glycan (N-linked (GlcNAc...) asparagine) is linked at Asn-369.

It belongs to the glycosyl hydrolase 27 family. Homodimer.

The protein localises to the lysosome. It carries out the reaction Cleavage of non-reducing alpha-(1-&gt;3)-N-acetylgalactosamine residues from human blood group A and AB mucin glycoproteins, Forssman hapten and blood group A lacto series glycolipids.. The enzyme catalyses a neolactoside IV(3)-alpha-GalNAc,IV(2)-alpha-Fuc-nLc4Cer(d18:1(4E)) + H2O = a neolactoside IV(2)-alpha-Fuc-nLc4Cer(d18:1(4E)) + N-acetyl-alpha-D-galactosamine. It catalyses the reaction a neolactoside IV(3)-alpha-GalNAc,IV(2)-alpha-Fuc-nLc4Cer(d18:0) + H2O = a neolactoside IV(2)-alpha-Fuc-nLc4Cer(d18:0) + N-acetyl-alpha-D-galactosamine. The catalysed reaction is a globoside IV3GalNAc-Gb4Cer + H2O = N-acetyl-alpha-D-galactosamine + a globoside Gb4Cer. In terms of biological role, removes terminal alpha-N-acetylgalactosamine residues from glycolipids and glycopeptides. Required for the breakdown of glycolipids. The chain is Alpha-N-acetylgalactosaminidase (NAGA) from Gallus gallus (Chicken).